The primary structure comprises 276 residues: Aliphatic sulfonates import ATP-binding protein SsuB 1 (276 aa).

Residues 1–21 (MSTGNVTTLRRPEAPPSLPAG) form a disordered region. An ABC transporter domain is found at 39–259 (FSFRNVTKSF…RHGTPEFARL (221 aa)). 71–78 (GKSGCGKS) is an ATP binding site.

This sequence belongs to the ABC transporter superfamily. Aliphatic sulfonates importer (TC 3.A.1.17.2) family. The complex is composed of two ATP-binding proteins (SsuB), two transmembrane proteins (SsuC) and a solute-binding protein (SsuA).

The protein localises to the cell inner membrane. It catalyses the reaction ATP + H2O + aliphatic sulfonate-[sulfonate-binding protein]Side 1 = ADP + phosphate + aliphatic sulfonateSide 2 + [sulfonate-binding protein]Side 1.. Functionally, part of the ABC transporter complex SsuABC involved in aliphatic sulfonates import. Responsible for energy coupling to the transport system. The chain is Aliphatic sulfonates import ATP-binding protein SsuB 1 from Agrobacterium fabrum (strain C58 / ATCC 33970) (Agrobacterium tumefaciens (strain C58)).